A 245-amino-acid chain; its full sequence is MIVIPAIDLKEGKCVRLEQGLMERDTVYSDDPAAQALVWEAKGAELLHIVDLDGAFAGEPKNRGAIEAIVKALKITTQLGGGIRDLATIEAYLGMGIGRVIIGTAAQRNPELVQEACRKFPGRIVVGIDAKNGMVAVQGWAEVTGVTAIDLAKKFEGFGVAAIVYTDISRDGMMKGPNIEATRNLAEAITIPVIASGGVSALRDIENLMAVEAAGISGAITGKAIYSGAIELSEAIALTRRGASC.

The active-site Proton acceptor is the Asp-8. Asp-129 functions as the Proton donor in the catalytic mechanism.

The protein belongs to the HisA/HisF family.

The protein resides in the cytoplasm. It catalyses the reaction 1-(5-phospho-beta-D-ribosyl)-5-[(5-phospho-beta-D-ribosylamino)methylideneamino]imidazole-4-carboxamide = 5-[(5-phospho-1-deoxy-D-ribulos-1-ylimino)methylamino]-1-(5-phospho-beta-D-ribosyl)imidazole-4-carboxamide. Its pathway is amino-acid biosynthesis; L-histidine biosynthesis; L-histidine from 5-phospho-alpha-D-ribose 1-diphosphate: step 4/9. The polypeptide is 1-(5-phosphoribosyl)-5-[(5-phosphoribosylamino)methylideneamino] imidazole-4-carboxamide isomerase (Geotalea daltonii (strain DSM 22248 / JCM 15807 / FRC-32) (Geobacter daltonii)).